The sequence spans 520 residues: Diacylglycerol O-acyltransferase 1 (520 aa).

Disordered stretches follow at residues arginine 28–alanine 57 and glutamine 72–arginine 116. A compositionally biased stretch (low complexity) spans aspartate 34 to glycine 54. The segment covering asparagine 81–arginine 98 has biased composition (gly residues). 7 helical membrane-spanning segments follow: residues alanine 126–valine 146, tryptophan 176–glutamate 196, proline 207–valine 227, serine 233–valine 253, valine 276–tyrosine 296, lysine 317–valine 337, and valine 365–leucine 385. The FYXDWWN motif signature appears at phenylalanine 392–asparagine 398. Transmembrane regions (helical) follow at residues leucine 434 to proline 454, leucine 457 to asparagine 477, and valine 487 to leucine 507. The active site involves histidine 447.

The protein belongs to the membrane-bound acyltransferase family. Sterol o-acyltransferase subfamily. In terms of assembly, interacts with LPCAT2 and LPAT2. As to expression, ubiquitous. Highest expression in young developing seeds.

It localises to the plastid. The protein localises to the chloroplast membrane. Its subcellular location is the endoplasmic reticulum membrane. It carries out the reaction an acyl-CoA + a 1,2-diacyl-sn-glycerol = a triacyl-sn-glycerol + CoA. The enzyme catalyses 1,2-di-(9Z-octadecenoyl)-sn-glycerol + (9Z)-octadecenoyl-CoA = 1,2,3-tri-(9Z-octadecenoyl)-glycerol + CoA. The protein operates within glycerolipid metabolism; triacylglycerol biosynthesis. With respect to regulation, partially inhibited by niacin. Major contributor to triacylglycerol (TAG) synthesis and oil accumulation in seeds. Catalyzes the acylation of the sn-3 hydroxy group of sn-1,2-diacylglycerol using acyl-CoA. Can use palmitoyl-CoA and oleoyl-CoA as substrates. Can use oleoyl-CoA and linoleoyl-CoA as substrates. Has substrate preference for oleoyl-CoA compared to linoleoyl-CoA. Has complementary functions with PDAT1 that are essential for triacylglycerol synthesis and normal development of both seeds and pollen. The protein is Diacylglycerol O-acyltransferase 1 of Arabidopsis thaliana (Mouse-ear cress).